The following is a 921-amino-acid chain: Protein translocase subunit SecA (921 aa).

ATP is bound by residues Q87, 105–109, and D516; that span reads GEGKT. Zn(2+) is bound by residues C905, C907, C916, and H917.

The protein belongs to the SecA family. Monomer and homodimer. Part of the essential Sec protein translocation apparatus which comprises SecA, SecYEG and auxiliary proteins SecDF-YajC and YidC. It depends on Zn(2+) as a cofactor.

The protein localises to the cell inner membrane. The protein resides in the cytoplasm. It carries out the reaction ATP + H2O + cellular proteinSide 1 = ADP + phosphate + cellular proteinSide 2.. Its function is as follows. Part of the Sec protein translocase complex. Interacts with the SecYEG preprotein conducting channel. Has a central role in coupling the hydrolysis of ATP to the transfer of proteins into and across the cell membrane, serving both as a receptor for the preprotein-SecB complex and as an ATP-driven molecular motor driving the stepwise translocation of polypeptide chains across the membrane. The sequence is that of Protein translocase subunit SecA from Polaromonas sp. (strain JS666 / ATCC BAA-500).